The primary structure comprises 484 residues: MSRKQRISAGLGLGASLLCCNPLFAGPVGPDRNFGMEVKVTAQSEDDRDLDTRSGGDAEGIALDLRPWVYGQRGNWGAMVMLQAVAATDIIETDPTDPNEEPGGDPANGFSRDSSRDPDKSYLALREFELGTIGRQRIRSLTNEGTWWDIHMESVNWTMDTSLLRAQAGVAKRFDEYRTDLDNLSAEDKDRTHVFGGLDYQWRQGHWAGFKVHHTSDDGDLPDSQMDVYEDRQSKSYTGDLTWLSVHLDRDFFNPRSTLPINYWGEFTWLTGEMDRSHFASDGSADHYKDVDVDAWAVDLGLRWNISDRWNVGAAYARGQAGEGDDESEQFMQTGLQSNRSTFTGLQTRIHRFGEASRGELTNLQVGTLFTSWKPREDLETSLIYHKFWRVDDDEDLGQNGISPIEKDGKPALKAGEKDLGQEVDLIITRYFNQGMLPANWGGELDEQSALIRLRSGLFFPSNAYASKGDSKMHRVFVDMIWRF.

A signal peptide spans M1 to A25. Residues T93–G103 are compositionally biased toward acidic residues. The interval T93 to P118 is disordered.

The protein belongs to the AlgE family.

Its subcellular location is the cell outer membrane. The protein operates within glycan biosynthesis; alginate biosynthesis. Has non-porin-like, channel-forming properties and probably functions as an alginate permeability pore. The sequence is that of Alginate production protein AlgE (algE) from Azotobacter vinelandii.